Reading from the N-terminus, the 1168-residue chain is Zinc finger CCHC domain-containing protein 2 (1168 aa).

Disordered regions lie at residues 1–87 (MLRM…GGHA), 209–242 (EGSR…CAKL), 561–693 (KRSL…LGTE), and 932–978 (ATSA…SDST). The segment covering 43–66 (PPPPPPTGLPRGPPPPPPSPPRGL) has biased composition (pro residues). Residues 67–78 (EPPVASGPTAGA) show a composition bias toward low complexity. Positions 216–227 (EDEPGGDDEQDA) are enriched in acidic residues. Residues 233-242 (GPEGGGCAKL) show a composition bias toward gly residues. The span at 574-588 (PQVEKEKIKKTENRL) shows a compositional bias: basic and acidic residues. Positions 626 to 635 (SSESYSSPSS) are enriched in low complexity. Residues 636–655 (PRHDGRESLESEEEKDRDTD) are compositionally biased toward basic and acidic residues. Residues 932–949 (ATSAQPASTGISPAQSTV) are compositionally biased toward polar residues. The segment covering 951–965 (PAVPTHTPGPAPSPS) has biased composition (pro residues). A compositionally biased stretch (polar residues) spans 966-978 (PALTHSTAQSDST). Residues 1121-1138 (VSCYNCGVSGHYAQDCKQ) form a CCHC-type zinc finger.

The chain is Zinc finger CCHC domain-containing protein 2 (Zcchc2) from Rattus norvegicus (Rat).